A 162-amino-acid polypeptide reads, in one-letter code: Caveolin-2 (162 aa).

Residues 1–86 lie on the Cytoplasmic side of the membrane; sequence MGLETEKADV…FEVSKYVIYK (86 aa). Tyr19 bears the Phosphotyrosine; by SRC mark. Phosphoserine is present on residues Ser20, Ser23, and Ser36. Residues 87-107 constitute an intramembrane region (helical); sequence FLTLLLAMPMAFAAGVLFATL. Residues 108 to 162 lie on the Cytoplasmic side of the membrane; it reads SCLHIWIIMPFVKTCLMVLPSVQTIWKSVTDAVIAPLCSSVGRSFSSVSLQVSHD.

It belongs to the caveolin family. Monomer or homodimer. Interacts with CAV1; the interaction forms a stable heterooligomeric complex that is required for targeting to lipid rafts and for caveolae formation. Tyrosine phosphorylated forms do not form heterooligomers with the Tyr-19-phosphorylated form existing as a monomer or dimer. Interacts (tyrosine phosphorylated form) with the SH2 domain-containing proteins, RASA1, NCK1 and SRC. Interacts (tyrosine phosphorylated form) with INSR. Interacts (Tyr-19 phosphorylated form) with MAPK1 (phosphorylated form); the interaction, promoted by insulin, leads to nuclear location and MAPK1 activation. Interacts with STAT3; the interaction is increased on insulin-induced tyrosine phosphorylation leading to STAT activation. Post-translationally, phosphorylated on serine and tyrosine residues. CAV1 promotes phosphorylation on Ser-23 which then targets the complex to the plasma membrane, lipid rafts and caveolae. Phosphorylation on Ser-36 appears to modulate mitosis in endothelial cells. Phosphorylation on Tyr-19 is required for insulin-induced phosphorylation of MAPK1 and DNA binding of STAT3. Tyrosine phosphorylation is induced by both EGF and insulin.

The protein localises to the nucleus. It localises to the cytoplasm. It is found in the golgi apparatus membrane. The protein resides in the cell membrane. Its subcellular location is the membrane. The protein localises to the caveola. Its function is as follows. May act as a scaffolding protein within caveolar membranes. Interacts directly with G-protein alpha subunits and can functionally regulate their activity. Acts as an accessory protein in conjunction with CAV1 in targeting to lipid rafts and driving caveolae formation. The Ser-36 phosphorylated form has a role in modulating mitosis in endothelial cells. Positive regulator of cellular mitogenesis of the MAPK signaling pathway. Required for the insulin-stimulated nuclear translocation and activation of MAPK1 and STAT3, and the subsequent regulation of cell cycle progression. The protein is Caveolin-2 (CAV2) of Canis lupus familiaris (Dog).